Here is a 134-residue protein sequence, read N- to C-terminus: Fatty acid-binding protein 5 (134 aa).

The short motif at 23–33 (KELGVGMAMRK) is the Nuclear localization signal element. Hexadecanoate is bound by residues Arg109 and 129–131 (RVY). 2 residues coordinate N-eicosanoyl ethanolamine: Arg109 and Tyr131. 129–131 (RVY) serves as a coordination point for (9Z,12Z)-octadecadienoate.

This sequence belongs to the calycin superfamily. Fatty-acid binding protein (FABP) family. As to quaternary structure, monomer.

The protein resides in the cytoplasm. The protein localises to the nucleus. It is found in the synapse. Its subcellular location is the postsynaptic density. It localises to the secreted. The enzyme catalyses hexadecanoate(out) = hexadecanoate(in). It catalyses the reaction (9Z,12Z)-octadecadienoate(out) = (9Z,12Z)-octadecadienoate(in). It carries out the reaction (9Z)-octadecenoate(out) = (9Z)-octadecenoate(in). Its function is as follows. Intracellular carrier for long-chain fatty acids and related active lipids, such as endocannabinoids, that regulate the metabolism and actions of the ligands they bind. In addition to the cytosolic transport, selectively delivers specific fatty acids from the cytosol to the nucleus, wherein they activate nuclear receptors. Delivers retinoic acid to the nuclear receptor peroxisome proliferator-activated receptor delta; which promotes proliferation and survival. May also serve as a synaptic carrier of endocannabinoid at central synapses and thus controls retrograde endocannabinoid signaling. Modulates inflammation by regulating PTGES induction via NF-kappa-B activation, and prostaglandin E2 (PGE2) biosynthesis during inflammation. Has the highest binding affinity for docosahexaenoic acid (DHA) and decreasing relative affinity for eicosapentaenoic acid (EPA), alpha-linolenic acid (ALA), oleic acid, palmitic acid, linoleic acid and stearic acid, respectively. The protein is Fatty acid-binding protein 5 of Pygoscelis papua (Gentoo penguin).